Consider the following 63-residue polypeptide: Alpha-toxin CsE5 (63 aa).

Residues 2–61 (KDGYPVDSGNCKYECLKDDYCNDLCLERKADKGYCYWGKVSCYCYGLPDNSPTKTSGKCN) enclose the LCN-type CS-alpha/beta domain. 4 disulfide bridges follow: C12/C60, C16/C36, C22/C43, and C26/C45.

Belongs to the long (4 C-C) scorpion toxin superfamily. Sodium channel inhibitor family. Alpha subfamily. In terms of tissue distribution, expressed by the venom gland.

Its subcellular location is the secreted. Functionally, alpha toxins bind voltage-independently at site-3 of sodium channels (Nav) and inhibit the inactivation of the activated channels, thereby blocking neuronal transmission. In Centruroides sculpturatus (Arizona bark scorpion), this protein is Alpha-toxin CsE5.